Here is a 284-residue protein sequence, read N- to C-terminus: Diaminopimelate epimerase (284 aa).

Residues Asn20, Gln53, and Asn73 each contribute to the substrate site. Cys82 acts as the Proton donor in catalysis. Residues 83–84 (GN), Asn167, Asn200, and 218–219 (ER) contribute to the substrate site. Residue Cys227 is the Proton acceptor of the active site. 228–229 (GS) serves as a coordination point for substrate.

Belongs to the diaminopimelate epimerase family. As to quaternary structure, homodimer.

The protein resides in the cytoplasm. It carries out the reaction (2S,6S)-2,6-diaminopimelate = meso-2,6-diaminopimelate. It functions in the pathway amino-acid biosynthesis; L-lysine biosynthesis via DAP pathway; DL-2,6-diaminopimelate from LL-2,6-diaminopimelate: step 1/1. Its function is as follows. Catalyzes the stereoinversion of LL-2,6-diaminopimelate (L,L-DAP) to meso-diaminopimelate (meso-DAP), a precursor of L-lysine and an essential component of the bacterial peptidoglycan. This chain is Diaminopimelate epimerase, found in Xylella fastidiosa (strain 9a5c).